The primary structure comprises 76 residues: Small ribosomal subunit protein bS18 (76 aa).

Belongs to the bacterial ribosomal protein bS18 family. Part of the 30S ribosomal subunit. Forms a tight heterodimer with protein bS6.

Binds as a heterodimer with protein bS6 to the central domain of the 16S rRNA, where it helps stabilize the platform of the 30S subunit. The protein is Small ribosomal subunit protein bS18 of Xanthomonas euvesicatoria pv. vesicatoria (strain 85-10) (Xanthomonas campestris pv. vesicatoria).